Consider the following 153-residue polypeptide: Large ribosomal subunit protein uL30 (153 aa).

This sequence belongs to the universal ribosomal protein uL30 family. Part of the 50S ribosomal subunit.

The sequence is that of Large ribosomal subunit protein uL30 from Methanosarcina mazei (strain ATCC BAA-159 / DSM 3647 / Goe1 / Go1 / JCM 11833 / OCM 88) (Methanosarcina frisia).